The primary structure comprises 338 residues: 4-hydroxy-2-oxovalerate aldolase (338 aa).

The Pyruvate carboxyltransferase domain maps to 6-256 (IHIVDTTLRD…RTGVDFYKVM (251 aa)). 14 to 15 (RD) contributes to the substrate binding site. Asp15 is a binding site for Mn(2+). The active-site Proton acceptor is the His18. Residues Ser168 and His195 each contribute to the substrate site. 2 residues coordinate Mn(2+): His195 and His197. Tyr286 serves as a coordination point for substrate.

This sequence belongs to the 4-hydroxy-2-oxovalerate aldolase family.

The enzyme catalyses (S)-4-hydroxy-2-oxopentanoate = acetaldehyde + pyruvate. This Moorella thermoacetica (strain ATCC 39073 / JCM 9320) protein is 4-hydroxy-2-oxovalerate aldolase.